We begin with the raw amino-acid sequence, 276 residues long: Protein HemX (276 aa).

8 helical membrane passes run 9 to 29 (LNEGTIVIYALSVLFYFIDFL), 40 to 60 (FWLLSIVWTLQTVYLAYFMWV), 66 to 86 (VLNVTEALYFYAWVLVTLSLV), 93 to 113 (VDFIVFFTNVIGFSMIAIHTF), 132 to 152 (LVIHITMAILSYGAFSLSFVF), 187 to 207 (VLNVIGVPMLLLSLILGVIWA), 217 to 237 (FDAKVLGSFVVLLLYSYYLYI), and 247 to 267 (VAALWNTACFLVLMINYFLLG).

This sequence to M.leprae U1620K.

The protein resides in the cell membrane. Functionally, required for HemL synthesis. The protein is Protein HemX (hemX) of Bacillus subtilis (strain 168).